Here is a 490-residue protein sequence, read N- to C-terminus: ATP synthase subunit beta, plastid (490 aa).

170–177 (GGAGVGKT) lines the ATP pocket.

This sequence belongs to the ATPase alpha/beta chains family. In terms of assembly, F-type ATPases have 2 components, CF(1) - the catalytic core - and CF(0) - the membrane proton channel. CF(1) has five subunits: alpha(3), beta(3), gamma(1), delta(1), epsilon(1). CF(0) has four main subunits: a(1), b(1), b'(1) and c(9-12).

The protein localises to the plastid membrane. The enzyme catalyses ATP + H2O + 4 H(+)(in) = ADP + phosphate + 5 H(+)(out). Produces ATP from ADP in the presence of a proton gradient across the membrane. The catalytic sites are hosted primarily by the beta subunits. This Cuscuta exaltata (Tall dodder) protein is ATP synthase subunit beta, plastid.